Reading from the N-terminus, the 374-residue chain is Putative glutamate--cysteine ligase 2 (374 aa).

Belongs to the glutamate--cysteine ligase type 2 family. YbdK subfamily.

It carries out the reaction L-cysteine + L-glutamate + ATP = gamma-L-glutamyl-L-cysteine + ADP + phosphate + H(+). Its function is as follows. ATP-dependent carboxylate-amine ligase which exhibits weak glutamate--cysteine ligase activity. In Leptothrix cholodnii (strain ATCC 51168 / LMG 8142 / SP-6) (Leptothrix discophora (strain SP-6)), this protein is Putative glutamate--cysteine ligase 2.